A 269-amino-acid polypeptide reads, in one-letter code: Formamidopyrimidine-DNA glycosylase (269 aa).

The active-site Schiff-base intermediate with DNA is Pro-2. Glu-3 serves as the catalytic Proton donor. Catalysis depends on Lys-57, which acts as the Proton donor; for beta-elimination activity. The DNA site is built by His-90, Arg-109, and Lys-150. The FPG-type zinc finger occupies 235-269 (QVYGRKGEPCRVCGTPIVATKHAQRATFYCRQCQK). Arg-259 acts as the Proton donor; for delta-elimination activity in catalysis.

The protein belongs to the FPG family. As to quaternary structure, monomer. The cofactor is Zn(2+).

It catalyses the reaction Hydrolysis of DNA containing ring-opened 7-methylguanine residues, releasing 2,6-diamino-4-hydroxy-5-(N-methyl)formamidopyrimidine.. The enzyme catalyses 2'-deoxyribonucleotide-(2'-deoxyribose 5'-phosphate)-2'-deoxyribonucleotide-DNA = a 3'-end 2'-deoxyribonucleotide-(2,3-dehydro-2,3-deoxyribose 5'-phosphate)-DNA + a 5'-end 5'-phospho-2'-deoxyribonucleoside-DNA + H(+). Functionally, involved in base excision repair of DNA damaged by oxidation or by mutagenic agents. Acts as a DNA glycosylase that recognizes and removes damaged bases. Has a preference for oxidized purines, such as 7,8-dihydro-8-oxoguanine (8-oxoG). Has AP (apurinic/apyrimidinic) lyase activity and introduces nicks in the DNA strand. Cleaves the DNA backbone by beta-delta elimination to generate a single-strand break at the site of the removed base with both 3'- and 5'-phosphates. This Escherichia coli O7:K1 (strain IAI39 / ExPEC) protein is Formamidopyrimidine-DNA glycosylase.